The chain runs to 382 residues: C-type lectin domain-containing protein 38 (382 aa).

The Cytoplasmic segment spans residues M1–L40. The chain crosses the membrane as a helical span at residues I41–F61. Residues F62 to F382 are Extracellular-facing. The interval N97–S116 is disordered. The span at T100–S116 shows a compositional bias: low complexity. N-linked (GlcNAc...) asparagine glycans are attached at residues N108 and N189. C-type lectin domains follow at residues V129 to E250 and Y264 to K377. 4 disulfide bridges follow: C150-C249, C223-C241, C285-C376, and C348-C368.

As to expression, expressed in ventral cord motor neurons and PLM touch neurons.

It is found in the membrane. Its function is as follows. Involved in negative modulation of unc-40-mediated axon outgrowth. Required for proper presynaptic development in axons that have reached their targets. May function in concert with E3 ubiquitin-protein ligase rpm-1 in regulating axon outgrowth. The polypeptide is C-type lectin domain-containing protein 38 (Caenorhabditis elegans).